Reading from the N-terminus, the 52-residue chain is Nuclear respiratory factor 1 (52 aa).

It belongs to the NRF1/Ewg family. As to quaternary structure, homodimer. Binds DNA as a dimer. Interacts with PPRC1. Post-translationally, phosphorylation enhances DNA binding. In terms of tissue distribution, expressed at high levels in the lung and testis, at intermediate levels in the kidney, heart and brain and at low levels in the muscle and liver.

Its subcellular location is the nucleus. Its function is as follows. Transcription factor that activates the expression of the EIF2S1 (EIF2-alpha) gene. Links the transcriptional modulation of key metabolic genes to cellular growth and development. Implicated in the control of nuclear genes required for respiration, heme biosynthesis, and mitochondrial DNA transcription and replication. The sequence is that of Nuclear respiratory factor 1 (Nrf1) from Rattus norvegicus (Rat).